Consider the following 226-residue polypeptide: Putative ABC transporter ATP-binding protein BQ02700 (226 aa).

Residues 4 to 225 enclose the ABC transporter domain; it reads IKFDKVTQVF…VAIKEYIRRM (222 aa). 35 to 42 provides a ligand contact to ATP; it reads GANGSGKS.

Belongs to the ABC transporter superfamily.

The protein localises to the cell inner membrane. Functionally, probably part of an ABC transporter complex. Responsible for energy coupling to the transport system. This is Putative ABC transporter ATP-binding protein BQ02700 from Bartonella quintana (strain Toulouse) (Rochalimaea quintana).